We begin with the raw amino-acid sequence, 122 residues long: Small ribosomal subunit protein bS6 (122 aa).

This sequence belongs to the bacterial ribosomal protein bS6 family.

Its function is as follows. Binds together with bS18 to 16S ribosomal RNA. This is Small ribosomal subunit protein bS6 from Methylibium petroleiphilum (strain ATCC BAA-1232 / LMG 22953 / PM1).